The primary structure comprises 396 residues: MAKKVVTDLDLKDKKVLVRVDFNVPMKDGKITNDNRIVAALPTIEYILEQNGKAILFSHLGKVKTEEDKEGKSLRPVAVRLSELLGKEVKFVPTTRGPELEKAIDELKDGEVLLFENTRFEDIDGKKESKNDPELGKYWASLGDVFVNDAFGTAHRAHASNVGIASNLESAAGFLMEKEIKFIGGVVDNPARPLVAILGGAKVSDKIGVIENLLTKADKVLVGGGMTFTFMAAQGQEIGKSLLEADKVELAKGLLEKAGDKLVLPVDAVVSKEFSNDAPFHTVSADSIPADEMGLDIGQATIDLFTKELQGAKTVVWNGPMGVFELSNFAKGTIGVCEAIANLTDATTIIGGGDSAAAAMDLGFADKFTHISTGGGASLEYLEGKELPGVASISDK.

Residues 21 to 23, Arg-36, 59 to 62, Arg-119, and Arg-156 contribute to the substrate site; these read DFN and HLGK. ATP-binding positions include Lys-206, Gly-294, Glu-325, and 352–355; that span reads GGDS.

It belongs to the phosphoglycerate kinase family. As to quaternary structure, monomer.

The protein localises to the cytoplasm. The catalysed reaction is (2R)-3-phosphoglycerate + ATP = (2R)-3-phospho-glyceroyl phosphate + ADP. Its pathway is carbohydrate degradation; glycolysis; pyruvate from D-glyceraldehyde 3-phosphate: step 2/5. This Listeria monocytogenes serovar 1/2a (strain ATCC BAA-679 / EGD-e) protein is Phosphoglycerate kinase.